The chain runs to 1241 residues: ATP-dependent helicase/nuclease subunit A (1241 aa).

Positions 12 to 485 constitute a UvrD-like helicase ATP-binding domain; the sequence is SQWTDDQWKA…IDLAKNFRSR (474 aa). 33-40 contributes to the ATP binding site; it reads AAAGSGKT. One can recognise a UvrD-like helicase C-terminal domain in the interval 505–805; that stretch reads GEIDYDADAE…RIMTIHKSKG (301 aa).

This sequence belongs to the helicase family. AddA subfamily. Heterodimer of AddA and AddB/RexB. Mg(2+) serves as cofactor.

It carries out the reaction Couples ATP hydrolysis with the unwinding of duplex DNA by translocating in the 3'-5' direction.. The catalysed reaction is ATP + H2O = ADP + phosphate + H(+). Its function is as follows. The heterodimer acts as both an ATP-dependent DNA helicase and an ATP-dependent, dual-direction single-stranded exonuclease. Recognizes the chi site generating a DNA molecule suitable for the initiation of homologous recombination. The AddA nuclease domain is required for chi fragment generation; this subunit has the helicase and 3' -&gt; 5' nuclease activities. In Bacillus thuringiensis subsp. konkukian (strain 97-27), this protein is ATP-dependent helicase/nuclease subunit A.